A 235-amino-acid polypeptide reads, in one-letter code: 7-cyano-7-deazaguanine synthase (235 aa).

An ATP-binding site is contributed by 16-26 (FSGGQDSTTCL). Zn(2+)-binding residues include C193, C201, C204, and C207.

It belongs to the QueC family. Zn(2+) serves as cofactor.

It catalyses the reaction 7-carboxy-7-deazaguanine + NH4(+) + ATP = 7-cyano-7-deazaguanine + ADP + phosphate + H2O + H(+). The protein operates within purine metabolism; 7-cyano-7-deazaguanine biosynthesis. In terms of biological role, catalyzes the ATP-dependent conversion of 7-carboxy-7-deazaguanine (CDG) to 7-cyano-7-deazaguanine (preQ(0)). This is 7-cyano-7-deazaguanine synthase from Actinobacillus succinogenes (strain ATCC 55618 / DSM 22257 / CCUG 43843 / 130Z).